A 396-amino-acid chain; its full sequence is Phosphoglycerate kinase (396 aa).

Residues 21 to 23 (DLN), Arg36, 59 to 62 (HLGR), Arg113, and Arg146 contribute to the substrate site. Residues Lys197, Glu319, and 345-348 (GGDT) contribute to the ATP site.

It belongs to the phosphoglycerate kinase family. Monomer.

It localises to the cytoplasm. It carries out the reaction (2R)-3-phosphoglycerate + ATP = (2R)-3-phospho-glyceroyl phosphate + ADP. The protein operates within carbohydrate degradation; glycolysis; pyruvate from D-glyceraldehyde 3-phosphate: step 2/5. In Legionella pneumophila (strain Lens), this protein is Phosphoglycerate kinase.